The chain runs to 467 residues: UDP-glycosyltransferase 71D1 (467 aa).

The Proton acceptor role is filled by His16. Residue His16 coordinates an anthocyanidin. Asp122 (charge relay) is an active-site residue. 7 residues coordinate UDP-alpha-D-glucose: Thr144, Gln341, His356, Trp359, Asn360, Ser361, and Glu364. Ala379 is an an anthocyanidin binding site. Positions 380 and 381 each coordinate UDP-alpha-D-glucose.

This sequence belongs to the UDP-glycosyltransferase family.

It catalyses the reaction a flavonol + UDP-alpha-D-glucose = a flavonol 3-O-beta-D-glucoside + UDP + H(+). Functionally, possesses quercetin 3-O-glucosyltransferase activity in vitro. In Arabidopsis thaliana (Mouse-ear cress), this protein is UDP-glycosyltransferase 71D1 (UGT71D1).